Consider the following 173-residue polypeptide: uncharacterized protein (173 aa).

An N-terminal signal peptide occupies residues 1-20; the sequence is MWYKVLGIVSLCSVYVSTQG. N-linked (GlcNAc...) asparagine glycosylation is present at asparagine 53.

Component of the acid-insoluble organic matrix of calcified shell layers (at protein level).

The protein localises to the secreted. This is an uncharacterized protein from Haliotis asinina (Donkey's ear abalone).